The following is a 567-amino-acid chain: Pyrethroid hydrolase Ces2e (567 aa).

Positions 1-36 (MAQTRAWKSIMPLESLPGWLNAVVWGLLLLFCQVQG) are cleaved as a signal peptide. Residue Q37 is modified to Pyrrolidone carboxylic acid. C105 and C132 are oxidised to a cystine. The active-site Acyl-ester intermediate is the S237. C289 and C300 are disulfide-bonded. Active-site charge relay system residues include E354 and H465.

This sequence belongs to the type-B carboxylesterase/lipase family. In terms of tissue distribution, expressed in liver.

Its subcellular location is the microsome. It carries out the reaction all-trans-retinyl hexadecanoate + H2O = all-trans-retinol + hexadecanoate + H(+). It catalyses the reaction (-)-trans-permethrin + H2O = (3-phenoxyphenyl)methanol + (1S,3R)-3-(2,2-dichlorovinyl)-2,2-dimethylcyclopropanecarboxylate + H(+). Carboxylesterase that catalyzes the hydrolysis of pyrethroids pesticides. Hydrolyzes trans-permethrin at a rate about 22-fold higher than cis-permethrin. Also hydrolyzes trans-cypermethrin. Hydrolyzes retinyl esters. This chain is Pyrethroid hydrolase Ces2e, found in Rattus norvegicus (Rat).